A 122-amino-acid polypeptide reads, in one-letter code: Large ribosomal subunit protein uL14c (122 aa).

This sequence belongs to the universal ribosomal protein uL14 family. As to quaternary structure, part of the 50S ribosomal subunit.

The protein localises to the plastid. Its subcellular location is the chloroplast. In terms of biological role, binds to 23S rRNA. The polypeptide is Large ribosomal subunit protein uL14c (Anthoceros angustus (Hornwort)).